The following is a 233-amino-acid chain: Mediator of RNA polymerase II transcription subunit 7 (233 aa).

Residue K185 forms a Glycyl lysine isopeptide (Lys-Gly) (interchain with G-Cter in SUMO1); alternate linkage. K185 participates in a covalent cross-link: Glycyl lysine isopeptide (Lys-Gly) (interchain with G-Cter in SUMO2); alternate. The interval 187-213 (EPMDADDSNNCTGQNEHQRENSGHRRD) is disordered. S194 bears the Phosphoserine mark. A compositionally biased stretch (basic and acidic residues) spans 202-213 (EHQRENSGHRRD).

This sequence belongs to the Mediator complex subunit 7 family. In terms of assembly, component of the Mediator complex, which is composed of MED1, MED4, MED6, MED7, MED8, MED9, MED10, MED11, MED12, MED13, MED13L, MED14, MED15, MED16, MED17, MED18, MED19, MED20, MED21, MED22, MED23, MED24, MED25, MED26, MED27, MED29, MED30, MED31, CCNC, CDK8 and CDC2L6/CDK11. The MED12, MED13, CCNC and CDK8 subunits form a distinct module termed the CDK8 module. Mediator containing the CDK8 module is less active than Mediator lacking this module in supporting transcriptional activation. Individual preparations of the Mediator complex lacking one or more distinct subunits have been variously termed ARC, CRSP, DRIP, PC2, SMCC and TRAP. Post-translationally, constitutively sumoylated.

It is found in the nucleus. Functionally, component of the Mediator complex, a coactivator involved in the regulated transcription of nearly all RNA polymerase II-dependent genes. Mediator functions as a bridge to convey information from gene-specific regulatory proteins to the basal RNA polymerase II transcription machinery. Mediator is recruited to promoters by direct interactions with regulatory proteins and serves as a scaffold for the assembly of a functional preinitiation complex with RNA polymerase II and the general transcription factors. The polypeptide is Mediator of RNA polymerase II transcription subunit 7 (MED7) (Homo sapiens (Human)).